The chain runs to 612 residues: Netrin unc-6 (612 aa).

A signal peptide spans methionine 1–glycine 21. Residues arginine 43–arginine 290 enclose the Laminin N-terminal domain. Asparagine 114, asparagine 128, and asparagine 268 each carry an N-linked (GlcNAc...) asparagine glycan. A disulfide bridge links cysteine 117 with cysteine 149. 14 cysteine pairs are disulfide-bonded: cysteine 291-cysteine 300, cysteine 293-cysteine 310, cysteine 312-cysteine 321, cysteine 324-cysteine 344, cysteine 347-cysteine 356, cysteine 349-cysteine 374, cysteine 377-cysteine 386, cysteine 389-cysteine 407, cysteine 410-cysteine 422, cysteine 412-cysteine 429, cysteine 431-cysteine 440, cysteine 443-cysteine 457, cysteine 478-cysteine 547, and cysteine 494-cysteine 604. Laminin EGF-like domains are found at residues cysteine 291–alanine 346, cysteine 347–serine 409, and cysteine 410–lysine 459. N-linked (GlcNAc...) asparagine glycosylation is present at asparagine 368. N-linked (GlcNAc...) asparagine glycosylation is present at asparagine 423. The 127-residue stretch at cysteine 478 to cysteine 604 folds into the NTR domain. A glycan (N-linked (GlcNAc...) asparagine) is linked at asparagine 564.

In terms of assembly, binds to unc-5 and unc-40 receptors.

It localises to the secreted. Its subcellular location is the extracellular space. It is found in the extracellular matrix. The protein localises to the basement membrane. Functionally, component of an extracellular matrix cue that guides dorsoventral migrations on the epidermis. Required for the guidance of pioneer axons and migrating cells along the body wall. In particular, it is required for the guidance of axons from neurons, including SubL neurons and AIY interneurons, into the nerve ring. During gonad morphogenesis, involved in distal tip cell (DTC) migration from the dorsal side of the hermaphrodite body to the midbody to allow for formation of gonad arms. Its association with either unc-40 or unc-5 receptors will lead to axon attraction or repulsion, respectively. Involved in dendritic morphogenesis; may act by association with unc-40 at the tips of growing dendrites for interaction with unc-5 on the apposing branch to induce mutual repulsion. Involved in the positioning of ray 1, the most anterior ray sensilium, in the male tail. Required for the formation of synapses between the AVA interneurons and the PHB sensory neurons. This Caenorhabditis elegans protein is Netrin unc-6.